Reading from the N-terminus, the 389-residue chain is Abscission/NoCut checkpoint regulator (389 aa).

The FYVE-type zinc-finger motif lies at 1 to 58 (MESRCYGCAVKFTLFKKEYGCKNCGRAFCNGCLSFSALVPRAGNTQQKVCKQCHTILT). The Zn(2+) site is built by cysteine 5, cysteine 8, cysteine 21, cysteine 24, cysteine 29, cysteine 32, cysteine 50, and cysteine 53. A Phosphoserine modification is found at serine 69. An MIM1-A motif is present at residues 99–112 (DQAIAERLARLRQE). Residue lysine 132 forms a Glycyl lysine isopeptide (Lys-Gly) (interchain with G-Cter in SUMO2) linkage. 2 disordered regions span residues 158-177 (PSHT…QAQQ) and 204-227 (QNDL…SQSL). Positions 167 to 177 (QAPDTRTQAQQ) are enriched in low complexity. Residues 214-226 (SQRTNSQGQASQS) show a composition bias toward polar residues. Serine 219 bears the Phosphoserine mark. Residues 226–261 (SLEEEKYKLLAEAAVELQEENTRQERILALAKRLAV) adopt a coiled-coil conformation. An MIM1-B motif is present at residues 252-265 (ILALAKRLAVLKGQ). Serine 280 carries the phosphoserine modification.

Interacts (via MIM1-B) with VPS4A; interaction takes place at the midbody ring following cytokinesis checkpoint activation.

It localises to the cytoplasm. The protein resides in the cytoskeleton. Its subcellular location is the microtubule organizing center. It is found in the centrosome. The protein localises to the cleavage furrow. It localises to the midbody. The protein resides in the midbody ring. Key regulator of abscission step in cytokinesis: part of the cytokinesis checkpoint, a process required to delay abscission to prevent both premature resolution of intercellular chromosome bridges and accumulation of DNA damage. Together with CHMP4C, required to retain abscission-competent VPS4 (VPS4A and/or VPS4B) at the midbody ring until abscission checkpoint signaling is terminated at late cytokinesis. Deactivation of AURKB results in dephosphorylation of CHMP4C followed by its dissociation from ZFYVE19/ANCHR and VPS4 and subsequent abscission. The chain is Abscission/NoCut checkpoint regulator (Zfyve19) from Mus musculus (Mouse).